The primary structure comprises 317 residues: Cold tolerance protein 1 (317 aa).

The protein belongs to the CTO1 family.

In terms of biological role, protein required for cold tolerance. Plays a role in the regulation of phosphate uptake. This is Cold tolerance protein 1 from Saccharomyces cerevisiae (strain ATCC 204508 / S288c) (Baker's yeast).